We begin with the raw amino-acid sequence, 350 residues long: Sperm equatorial segment protein 1 (350 aa).

The N-terminal stretch at 1–19 is a signal peptide; the sequence is MKPLVLLVALLLWPSSVPA. A glycan (N-linked (GlcNAc...) asparagine) is linked at Asn128.

The protein belongs to the SPESP1 family. Glycosylated. In testis there are two predominant forms of 77- and 67-kDa and a form of 47-kDa, whereas in epididymal sperm from caput, corpus, and cauda there are two forms of 47- and 43-kDa. Testis forms contain complex carbohydrate residues. Epididymal sperm forms are N-glycosylated. Then undergoes significant glycosylation in the testis and that the majority of these glycoconjugates are removed by the time sperm reach the caput epididymis. Highly expressed in testis, where it is localized in the acrosome of postmeiotic stages of spermiogenesis (round and elongating spermatids and in ejaculated spermatozoa) (at protein level). Poorly expressed in placenta and fetal lung.

It is found in the cytoplasmic vesicle. Its subcellular location is the secretory vesicle. The protein resides in the acrosome. Its function is as follows. Involved in fertilization ability of sperm. This chain is Sperm equatorial segment protein 1, found in Homo sapiens (Human).